Consider the following 415-residue polypeptide: ATP-dependent RNA helicase RhlB (415 aa).

The short motif at 9–37 (QRFSALPLHPIVRGALAKKGFDFCTPIQA) is the Q motif element. In terms of domain architecture, Helicase ATP-binding spans 40-218 (LPISLNGRDV…FEDMNDPEYI (179 aa)). 53-60 (AQTGTGKT) serves as a coordination point for ATP. A DEAD box motif is present at residues 164–167 (DEAD). Positions 241-389 (DKMALLLTLM…VSQYETEALL (149 aa)) constitute a Helicase C-terminal domain.

Belongs to the DEAD box helicase family. RhlB subfamily. In terms of assembly, component of the RNA degradosome, which is a multiprotein complex involved in RNA processing and mRNA degradation.

It localises to the cytoplasm. It catalyses the reaction ATP + H2O = ADP + phosphate + H(+). DEAD-box RNA helicase involved in RNA degradation. Has RNA-dependent ATPase activity and unwinds double-stranded RNA. This chain is ATP-dependent RNA helicase RhlB, found in Haemophilus influenzae (strain PittGG).